The primary structure comprises 534 residues: Glucans biosynthesis protein D (534 aa).

The tat-type signal signal peptide spans 1-26 (MQRRDFIRNASLALAAFGLPSLPACA).

The protein belongs to the OpgD/OpgG family. In terms of processing, predicted to be exported by the Tat system. The position of the signal peptide cleavage has not been experimentally proven.

It localises to the periplasm. The protein operates within glycan metabolism; osmoregulated periplasmic glucan (OPG) biosynthesis. In terms of biological role, probably involved in the control of the structural glucose backbone of osmoregulated periplasmic glucans (OPGs). The polypeptide is Glucans biosynthesis protein D (Stenotrophomonas maltophilia (strain R551-3)).